The chain runs to 882 residues: Pentatricopeptide repeat-containing protein At3g03580 (882 aa).

PPR repeat units lie at residues 3-37, 38-68, 70-104, 105-139, 140-170, 171-205, 206-240, 241-271, 272-307, 309-340, 341-371, 372-406, 407-441, 442-472, 473-507, 508-542, 543-573, 574-608, 609-639, and 645-675; these read TRVS…GLDS, SDFF…VSPA, NVYL…KVSP, DKYT…GFES, DLFV…MPVR, DLVS…WIVP, DSFT…GVNS, VVVV…MDVR, DSVS…KPDL, TVSS…GFVL, ESTV…MECK, DTVS…EEQA, DHIT…GICI, DLSV…MGTG, DTVT…EVVP, DMAT…GYES, ELQI…MSRR, DVVT…GIVP, DSVV…MKTH, and MIEH…MPIK. Positions 680 to 755 are type E motif; it reads IWASVLRACR…NPGYSWIEVG (76 aa). A type E(+) motif region spans residues 756 to 786; that stretch reads KNVHVFSSGDDSAPQSEAIYKSLEILYSLMA. The segment at 787–882 is type DYW motif; sequence KEGYIPDPRE…DGTCSCKDRW (96 aa).

This sequence belongs to the PPR family. PCMP-H subfamily.

The chain is Pentatricopeptide repeat-containing protein At3g03580 (PCMP-H23) from Arabidopsis thaliana (Mouse-ear cress).